A 1002-amino-acid chain; its full sequence is Mitogen-activated protein kinase kinase kinase 21 (1002 aa).

The tract at residues M1–S26 is disordered. In terms of domain architecture, SH3 spans T24–P88. The Protein kinase domain occupies L110 to L390. Residues I116–V124 and K137 each bind ATP. D247 acts as the Proton acceptor in catalysis. T283 is modified (phosphothreonine; by autocatalysis). Position 287 is a phosphoserine; by autocatalysis and MAP4K1 (S287). Leucine-zipper regions lie at residues I409–L430 and L444–L466. Disordered regions lie at residues T508–S531, G574–W604, H640–P689, A721–S778, L797–E823, and Q878–A899. Phosphoserine is present on residues S512, S527, and S531. At T576 the chain carries Phosphothreonine. The segment covering T584 to P596 has biased composition (basic and acidic residues). S598 is modified (phosphoserine). Residues D661–S677 show a composition bias toward basic and acidic residues. Composition is skewed to low complexity over residues Q740–A758 and S766–S778.

The protein belongs to the protein kinase superfamily. STE Ser/Thr protein kinase family. MAP kinase kinase kinase subfamily. As to quaternary structure, homodimer. Interacts with TLR4. It depends on Mg(2+) as a cofactor. Post-translationally, autophosphorylation on serine and threonine residues within the activation loop plays a role in enzyme activation.

The enzyme catalyses L-seryl-[protein] + ATP = O-phospho-L-seryl-[protein] + ADP + H(+). The catalysed reaction is L-threonyl-[protein] + ATP = O-phospho-L-threonyl-[protein] + ADP + H(+). Its activity is regulated as follows. Homodimerization via the leucine zipper domains is required for autophosphorylation and subsequent activation. In terms of biological role, negative regulator of TLR4 signaling. Does not activate JNK1/MAPK8 pathway, p38/MAPK14, nor ERK2/MAPK1 pathways. In Mus musculus (Mouse), this protein is Mitogen-activated protein kinase kinase kinase 21 (Map3k21).